Here is a 502-residue protein sequence, read N- to C-terminus: Glycerol kinase (502 aa).

Position 16 (T16) interacts with ADP. ATP is bound by residues T16, T17, and S18. T16 provides a ligand contact to sn-glycerol 3-phosphate. R20 is an ADP binding site. The sn-glycerol 3-phosphate site is built by R86, E87, Y138, and D247. R86, E87, Y138, D247, and Q248 together coordinate glycerol. 2 residues coordinate ADP: T269 and G312. The ATP site is built by T269, G312, Q316, and G413. G413 and N417 together coordinate ADP.

Belongs to the FGGY kinase family.

It carries out the reaction glycerol + ATP = sn-glycerol 3-phosphate + ADP + H(+). It participates in polyol metabolism; glycerol degradation via glycerol kinase pathway; sn-glycerol 3-phosphate from glycerol: step 1/1. With respect to regulation, inhibited by fructose 1,6-bisphosphate (FBP). In terms of biological role, key enzyme in the regulation of glycerol uptake and metabolism. Catalyzes the phosphorylation of glycerol to yield sn-glycerol 3-phosphate. The polypeptide is Glycerol kinase (Dechloromonas aromatica (strain RCB)).